Consider the following 374-residue polypeptide: Putative 2,3-diketo-5-methylthiopentyl-1-phosphate enolase (374 aa).

Substrate is bound by residues Lys138, 164–167 (QDDE), His255, Gly327, and 349–350 (GG). Asp166 is a binding site for Mg(2+).

It belongs to the RuBisCO large chain family. Type IV subfamily. Homodimer. Requires Mg(2+) as cofactor.

The enzyme catalyses 5-methylsulfanyl-2,3-dioxopentyl phosphate = 2-hydroxy-5-methylsulfanyl-3-oxopent-1-enyl phosphate. It participates in amino-acid biosynthesis; L-methionine biosynthesis via salvage pathway; L-methionine from S-methyl-5-thio-alpha-D-ribose 1-phosphate: step 3/6. Functionally, catalyzes the enolization of 2,3-diketo-5-methylthiopentyl-1-phosphate (DK-MTP-1-P) into 2-hydroxy-3-keto-5-methylthiopentenyl-1-phosphate (HK-MTPenyl-1-P). The sequence is that of Putative 2,3-diketo-5-methylthiopentyl-1-phosphate enolase (mtnW) from Shouchella clausii (strain KSM-K16) (Alkalihalobacillus clausii).